Consider the following 369-residue polypeptide: tRNA pseudouridine synthase D (369 aa).

Aspartate 80 functions as the Nucleophile in the catalytic mechanism. The TRUD domain maps to 156–318 (GIPNWFGEQR…LKQERRALRL (163 aa)).

This sequence belongs to the pseudouridine synthase TruD family.

The enzyme catalyses uridine(13) in tRNA = pseudouridine(13) in tRNA. Its function is as follows. Responsible for synthesis of pseudouridine from uracil-13 in transfer RNAs. This Xanthomonas axonopodis pv. citri (strain 306) protein is tRNA pseudouridine synthase D.